The sequence spans 549 residues: mRNA-capping enzyme subunit beta (549 aa).

Residue Ser-2 is modified to N-acetylserine. Ser-15 carries the post-translational modification Phosphoserine. Positions Leu-30–Asn-169 are disordered. Residues Asp-86–Met-96 are compositionally biased toward acidic residues. Ser-124 bears the Phosphoserine mark. Residues Ala-135–Ile-157 are compositionally biased toward basic and acidic residues. Lys-223 acts as the N6-GMP-lysine intermediate in catalysis.

The protein belongs to the fungal TPase family. In terms of assembly, heterodimer. The mRNA-capping enzyme is composed of two separate chains alpha and beta, respectively a mRNA guanylyltransferase and an mRNA 5'-triphosphate monophosphatase. Mg(2+) is required as a cofactor.

The protein resides in the nucleus. The catalysed reaction is a 5'-end triphospho-ribonucleoside in mRNA + H2O = a 5'-end diphospho-ribonucleoside in mRNA + phosphate + H(+). Its function is as follows. First step of mRNA capping. Converts the 5'-triphosphate end of a nascent mRNA chain into a diphosphate end. This is mRNA-capping enzyme subunit beta (CET1) from Saccharomyces cerevisiae (strain ATCC 204508 / S288c) (Baker's yeast).